The sequence spans 890 residues: UPF0182 protein Ppro_2689 (890 aa).

Transmembrane regions (helical) follow at residues 6 to 26, 50 to 70, 102 to 122, 157 to 177, 200 to 220, 244 to 264, and 266 to 286; these read FILI…LLAF, AGSG…NLLL, LGIP…AMQW, TITA…VLVY, LAIL…LDCF, TYRI…IGLW, and GAWR…VIGI.

It belongs to the UPF0182 family.

It localises to the cell membrane. The chain is UPF0182 protein Ppro_2689 from Pelobacter propionicus (strain DSM 2379 / NBRC 103807 / OttBd1).